Here is a 152-residue protein sequence, read N- to C-terminus: Transcriptional regulator MraZ (152 aa).

SpoVT-AbrB domains follow at residues 5–52 (ATLV…PLPE) and 81–124 (ASEC…DETT).

This sequence belongs to the MraZ family. Forms oligomers.

The protein resides in the cytoplasm. It is found in the nucleoid. Functionally, negatively regulates its own expression and that of the subsequent genes in the proximal part of the division and cell wall (dcw) gene cluster. Acts by binding directly to DNA. May also regulate the expression of genes outside the dcw cluster. The protein is Transcriptional regulator MraZ of Shigella dysenteriae serotype 1 (strain Sd197).